Here is a 287-residue protein sequence, read N- to C-terminus: Protease HtpX (287 aa).

A run of 2 helical transmembrane segments spans residues 4–24 (IFLL…VMSI) and 33–53 (GGLL…SLAI). His-139 is a Zn(2+) binding site. Glu-140 is a catalytic residue. Residue His-143 participates in Zn(2+) binding. The next 2 membrane-spanning stretches (helical) occupy residues 154–174 (LIQG…AGII) and 195–215 (AVVF…VAYF). Glu-220 lines the Zn(2+) pocket.

The protein belongs to the peptidase M48B family. Zn(2+) serves as cofactor.

It is found in the cell inner membrane. This is Protease HtpX from Shewanella oneidensis (strain ATCC 700550 / JCM 31522 / CIP 106686 / LMG 19005 / NCIMB 14063 / MR-1).